The sequence spans 295 residues: Replication-associated protein A (295 aa).

A disordered region spans residues methionine 1–glutamate 31. The region spanning serine 35–phenylalanine 138 is the CRESS-DNA virus Rep endonuclease domain. The short motif at phenylalanine 42 to tyrosine 45 is the RCR-1 element. 3 residues coordinate a divalent metal cation: glutamate 76, histidine 84, and histidine 86. The RCR-2 motif lies at histidine 84–histidine 86. The active-site For DNA cleavage activity is the tyrosine 124. The short motif at tyrosine 124–lysine 127 is the RCR-3 element. Residues serine 192–tyrosine 204 form an oligomerization region.

Belongs to the geminiviridae Rep protein family. In terms of assembly, homooligomer. Part of the C- and V-complexes which are RepA-Rep-DNA complexes involved in the c-sense and v-sense transcription.

The protein resides in the host nucleus. The protein localises to the host cytoplasm. In terms of biological role, implicated in enhancement of V-sense gene expression. Acts a an inhibitor of C-sense gene transcription. This Avena sativa (Oat) protein is Replication-associated protein A.